The primary structure comprises 245 residues: Acetylglutamate kinase (245 aa).

Substrate is bound by residues 41–42 (GG), Arg-63, and Asn-156.

This sequence belongs to the acetylglutamate kinase family. ArgB subfamily.

It is found in the cytoplasm. The enzyme catalyses N-acetyl-L-glutamate + ATP = N-acetyl-L-glutamyl 5-phosphate + ADP. The protein operates within amino-acid biosynthesis; L-arginine biosynthesis; N(2)-acetyl-L-ornithine from L-glutamate: step 2/4. Functionally, catalyzes the ATP-dependent phosphorylation of N-acetyl-L-glutamate. The polypeptide is Acetylglutamate kinase (Staphylococcus epidermidis (strain ATCC 35984 / DSM 28319 / BCRC 17069 / CCUG 31568 / BM 3577 / RP62A)).